A 1183-amino-acid chain; its full sequence is DNA-directed RNA polymerase subunit beta (1183 aa).

The disordered stretch occupies residues 1155–1183; it reads ADVDEDDVNEHKVNIQQSSIPESQKETTD.

This sequence belongs to the RNA polymerase beta chain family. The RNAP catalytic core consists of 2 alpha, 1 beta, 1 beta' and 1 omega subunit. When a sigma factor is associated with the core the holoenzyme is formed, which can initiate transcription.

It catalyses the reaction RNA(n) + a ribonucleoside 5'-triphosphate = RNA(n+1) + diphosphate. In terms of biological role, DNA-dependent RNA polymerase catalyzes the transcription of DNA into RNA using the four ribonucleoside triphosphates as substrates. The chain is DNA-directed RNA polymerase subunit beta from Staphylococcus carnosus (strain TM300).